The sequence spans 180 residues: Ribulose bisphosphate carboxylase small subunit, chloroplastic 5 (180 aa).

Residues 1–56 (MASSVMSSAAVATRGNGAQASMVAPFTGLKSTASFPVSRKQNLDITSIASNGGRVR) constitute a chloroplast transit peptide.

Belongs to the RuBisCO small chain family. As to quaternary structure, heterohexadecamer of 8 large and 8 small subunits.

It is found in the plastid. It localises to the chloroplast. Its function is as follows. RuBisCO catalyzes two reactions: the carboxylation of D-ribulose 1,5-bisphosphate, the primary event in carbon dioxide fixation, as well as the oxidative fragmentation of the pentose substrate. Both reactions occur simultaneously and in competition at the same active site. Although the small subunit is not catalytic it is essential for maximal activity. This is Ribulose bisphosphate carboxylase small subunit, chloroplastic 5 from Solanum tuberosum (Potato).